The following is a 224-amino-acid chain: LexA repressor (224 aa).

The segment at residues 31–51 (RAEIAAELGFKSANAAEEHLQ) is a DNA-binding region (H-T-H motif). Catalysis depends on for autocatalytic cleavage activity residues serine 142 and lysine 179.

The protein belongs to the peptidase S24 family. In terms of assembly, homodimer.

The enzyme catalyses Hydrolysis of Ala-|-Gly bond in repressor LexA.. In terms of biological role, represses a number of genes involved in the response to DNA damage (SOS response), including recA and lexA. In the presence of single-stranded DNA, RecA interacts with LexA causing an autocatalytic cleavage which disrupts the DNA-binding part of LexA, leading to derepression of the SOS regulon and eventually DNA repair. The chain is LexA repressor from Acidovorax ebreus (strain TPSY) (Diaphorobacter sp. (strain TPSY)).